The primary structure comprises 467 residues: Acetaldehyde dehydrogenase (acetylating) EutE (467 aa).

A targets protein to the BMC region spans residues 1–19 (MNQQDIEQVVKAVLLKMKD).

It belongs to the EutE/PduP family. In terms of assembly, interacts with EutS, which targets it to the interior of the BMC.

It localises to the bacterial microcompartment. It carries out the reaction acetaldehyde + NAD(+) + CoA = acetyl-CoA + NADH + H(+). The protein operates within amine and polyamine degradation; ethanolamine degradation. Acts as the second step in ethanolamine degradation by converting acetaldehyde into acetyl-CoA. Has a very strong preference for NAD(+) over NADP(+) in both catalytic directions. May play a role in bacterial microcompartment (BMC) assembly or maintenance. Directly targeted to the BMC. Functionally, expression of the eut operon allows this bacteria to use ethanolamine (EA) as a carbon, nitrogen and energy source. It relies on cobalamin (vitamin B12) both as a cofactor for the ethanolamine ammonia-lyase (EAL) activity and to induce the operon. EA enhances bacterial survival in macrophages in a concentration-dependent manner, suggesting it is an important nutrient during infection. In Salmonella typhimurium (strain LT2 / SGSC1412 / ATCC 700720), this protein is Acetaldehyde dehydrogenase (acetylating) EutE.